Here is a 98-residue protein sequence, read N- to C-terminus: NADH-ubiquinone oxidoreductase chain 4L (98 aa).

Transmembrane regions (helical) follow at residues 1–21 (MMPI…GALV), 28–48 (STLL…ALLI), and 59–79 (APLI…ALLV).

The protein belongs to the complex I subunit 4L family. Core subunit of respiratory chain NADH dehydrogenase (Complex I) which is composed of 45 different subunits.

It is found in the mitochondrion inner membrane. The catalysed reaction is a ubiquinone + NADH + 5 H(+)(in) = a ubiquinol + NAD(+) + 4 H(+)(out). Core subunit of the mitochondrial membrane respiratory chain NADH dehydrogenase (Complex I) which catalyzes electron transfer from NADH through the respiratory chain, using ubiquinone as an electron acceptor. Part of the enzyme membrane arm which is embedded in the lipid bilayer and involved in proton translocation. The polypeptide is NADH-ubiquinone oxidoreductase chain 4L (MT-ND4L) (Distoechurus pennatus (Feather-tailed possum)).